We begin with the raw amino-acid sequence, 72 residues long: Translation initiation factor IF-1 (72 aa).

The 72-residue stretch at 1–72 (MAKEDSIEMQ…TKGRIVFRAR (72 aa)) folds into the S1-like domain.

The protein belongs to the IF-1 family. As to quaternary structure, component of the 30S ribosomal translation pre-initiation complex which assembles on the 30S ribosome in the order IF-2 and IF-3, IF-1 and N-formylmethionyl-tRNA(fMet); mRNA recruitment can occur at any time during PIC assembly.

It is found in the cytoplasm. Functionally, one of the essential components for the initiation of protein synthesis. Stabilizes the binding of IF-2 and IF-3 on the 30S subunit to which N-formylmethionyl-tRNA(fMet) subsequently binds. Helps modulate mRNA selection, yielding the 30S pre-initiation complex (PIC). Upon addition of the 50S ribosomal subunit IF-1, IF-2 and IF-3 are released leaving the mature 70S translation initiation complex. This Idiomarina loihiensis (strain ATCC BAA-735 / DSM 15497 / L2-TR) protein is Translation initiation factor IF-1.